We begin with the raw amino-acid sequence, 164 residues long: Outer membrane protein assembly factor BamE (164 aa).

Residues 1–19 (MHAFFPRLLLLLLFLPLTH) form the signal peptide. Residues 111–164 (PAFSESEPAQNFFSPEQTFTPAPDTDSNMNEEPDKKGTVNFLKENQTNFYKDNQ) are disordered. Composition is skewed to polar residues over residues 117–140 (EPAQ…SNMN) and 153–164 (KENQTNFYKDNQ).

It belongs to the BamE family. Part of the Bam complex.

It localises to the cell outer membrane. Its function is as follows. Part of the outer membrane protein assembly complex, which is involved in assembly and insertion of beta-barrel proteins into the outer membrane. The protein is Outer membrane protein assembly factor BamE of Nitrosomonas europaea (strain ATCC 19718 / CIP 103999 / KCTC 2705 / NBRC 14298).